The sequence spans 192 residues: Der GTPase-activating protein YihI (192 aa).

Residues 1-80 are disordered; sequence MSRTKKTRRI…KAAVKEVKDP (80 aa). 3 stretches are compositionally biased toward basic and acidic residues: residues 9–25, 37–48, and 65–80; these read RITD…KPEQ, TRYELDAKAREE, and DPAE…VKDP.

It belongs to the YihI family. In terms of assembly, interacts with Der.

In terms of biological role, a GTPase-activating protein (GAP) that modifies Der/EngA GTPase function. May play a role in ribosome biogenesis. The protein is Der GTPase-activating protein YihI of Actinobacillus pleuropneumoniae serotype 7 (strain AP76).